The sequence spans 1072 residues: Carbamoyl phosphate synthase large chain (1072 aa).

The interval 1–401 (MPKRLDINTI…SLLKAVRSLE (401 aa)) is carboxyphosphate synthetic domain. Positions 129, 169, 175, 176, 208, 210, 215, 241, 242, 243, 284, and 298 each coordinate ATP. The 195-residue stretch at 133 to 327 (RTLMQDLNEP…IAKLAAKIAV (195 aa)) folds into the ATP-grasp 1 domain. Gln284, Glu298, and Asn300 together coordinate Mg(2+). 3 residues coordinate Mn(2+): Gln284, Glu298, and Asn300. Residues 402-546 (LGIYHLELDH…YSTYADENES (145 aa)) are oligomerization domain. The segment at 547–929 (IVTDRKSVVV…ALYKGLVASG (383 aa)) is carbamoyl phosphate synthetic domain. Residues 671–861 (EAALTKLGIP…MANVATKVIL (191 aa)) enclose the ATP-grasp 2 domain. Residues Arg707, Arg746, Glu752, Gly777, Val778, His779, Ser780, Gln820, and Glu832 each contribute to the ATP site. Residues Gln820, Glu832, and Asn834 each contribute to the Mg(2+) site. Gln820, Glu832, and Asn834 together coordinate Mn(2+). The MGS-like domain occupies 930 to 1072 (INIPTHGSVI…QTKRHEVVHA (143 aa)). The allosteric domain stretch occupies residues 930-1072 (INIPTHGSVI…QTKRHEVVHA (143 aa)).

Belongs to the CarB family. Composed of two chains; the small (or glutamine) chain promotes the hydrolysis of glutamine to ammonia, which is used by the large (or ammonia) chain to synthesize carbamoyl phosphate. Tetramer of heterodimers (alpha,beta)4. Mg(2+) is required as a cofactor. Mn(2+) serves as cofactor.

It carries out the reaction hydrogencarbonate + L-glutamine + 2 ATP + H2O = carbamoyl phosphate + L-glutamate + 2 ADP + phosphate + 2 H(+). The catalysed reaction is hydrogencarbonate + NH4(+) + 2 ATP = carbamoyl phosphate + 2 ADP + phosphate + 2 H(+). Its pathway is amino-acid biosynthesis; L-arginine biosynthesis; carbamoyl phosphate from bicarbonate: step 1/1. The protein operates within pyrimidine metabolism; UMP biosynthesis via de novo pathway; (S)-dihydroorotate from bicarbonate: step 1/3. Large subunit of the glutamine-dependent carbamoyl phosphate synthetase (CPSase). CPSase catalyzes the formation of carbamoyl phosphate from the ammonia moiety of glutamine, carbonate, and phosphate donated by ATP, constituting the first step of 2 biosynthetic pathways, one leading to arginine and/or urea and the other to pyrimidine nucleotides. The large subunit (synthetase) binds the substrates ammonia (free or transferred from glutamine from the small subunit), hydrogencarbonate and ATP and carries out an ATP-coupled ligase reaction, activating hydrogencarbonate by forming carboxy phosphate which reacts with ammonia to form carbamoyl phosphate. The chain is Carbamoyl phosphate synthase large chain from Bacillus cereus (strain B4264).